Consider the following 29-residue polypeptide: Cyclotide psyleio B (29 aa).

Residues Gly-1–Arg-29 constitute a cross-link (cyclopeptide (Gly-Arg)). 3 disulfides stabilise this stretch: Cys-6-Cys-20, Cys-10-Cys-22, and Cys-15-Cys-27.

Post-translationally, this is a cyclic peptide.

In terms of biological role, probably participates in a plant defense mechanism. The sequence is that of Cyclotide psyleio B from Psychotria brachyceras.